The following is a 351-amino-acid chain: MTIDAALADKIRRTPKAELHVHIEGTLEPELIFRLAQRNHVNLPYPSVEALRAAYAFTDLQSFLDIYYAGASVLLTEEDFFDMTMDYVKRAVADNVRHAEIFFDPQTHTARGVPIGTVIDGISDALAQARTEYDFSSSLILCFLRHLSEEDAFATLEAALPYRDRFVGVGLDSSEKGNPPEKFARVFTRARELGLHLVAHAGEEGPAQYVTDALDILKVERIDHGVRSIDDAALIERLARERVALTVCPLSNQKLKVHPDLSEHPLKRMLDAGVAITLHSDDPAYFGGYMNANWEATFAALPLDAADAHKLARNSFEAAFLPPMQKAEFLAEVDHFWSATPTSPPATAPAA.

His20, His22, and His200 together coordinate Zn(2+). The active-site Proton donor is the Glu203. Asp281 is a binding site for Zn(2+). Asp282 is a binding site for substrate.

Belongs to the metallo-dependent hydrolases superfamily. Adenosine and AMP deaminases family. Adenine deaminase type 2 subfamily. Zn(2+) is required as a cofactor.

The catalysed reaction is adenine + H2O + H(+) = hypoxanthine + NH4(+). In terms of biological role, catalyzes the hydrolytic deamination of adenine to hypoxanthine. Plays an important role in the purine salvage pathway and in nitrogen catabolism. This chain is Adenine deaminase, found in Cupriavidus pinatubonensis (strain JMP 134 / LMG 1197) (Cupriavidus necator (strain JMP 134)).